A 186-amino-acid chain; its full sequence is ATP synthase subunit delta (186 aa).

This sequence belongs to the ATPase delta chain family. As to quaternary structure, F-type ATPases have 2 components, F(1) - the catalytic core - and F(0) - the membrane proton channel. F(1) has five subunits: alpha(3), beta(3), gamma(1), delta(1), epsilon(1). F(0) has three main subunits: a(1), b(2) and c(10-14). The alpha and beta chains form an alternating ring which encloses part of the gamma chain. F(1) is attached to F(0) by a central stalk formed by the gamma and epsilon chains, while a peripheral stalk is formed by the delta and b chains.

It localises to the cell inner membrane. Its function is as follows. F(1)F(0) ATP synthase produces ATP from ADP in the presence of a proton or sodium gradient. F-type ATPases consist of two structural domains, F(1) containing the extramembraneous catalytic core and F(0) containing the membrane proton channel, linked together by a central stalk and a peripheral stalk. During catalysis, ATP synthesis in the catalytic domain of F(1) is coupled via a rotary mechanism of the central stalk subunits to proton translocation. This protein is part of the stalk that links CF(0) to CF(1). It either transmits conformational changes from CF(0) to CF(1) or is implicated in proton conduction. The sequence is that of ATP synthase subunit delta from Ruegeria sp. (strain TM1040) (Silicibacter sp.).